The sequence spans 354 residues: Uroporphyrinogen decarboxylase (354 aa).

Residues arginine 27–arginine 31, aspartate 77, tyrosine 154, serine 209, and histidine 327 contribute to the substrate site.

Belongs to the uroporphyrinogen decarboxylase family. As to quaternary structure, homodimer.

It localises to the cytoplasm. The enzyme catalyses uroporphyrinogen III + 4 H(+) = coproporphyrinogen III + 4 CO2. Its pathway is porphyrin-containing compound metabolism; protoporphyrin-IX biosynthesis; coproporphyrinogen-III from 5-aminolevulinate: step 4/4. Catalyzes the decarboxylation of four acetate groups of uroporphyrinogen-III to yield coproporphyrinogen-III. The polypeptide is Uroporphyrinogen decarboxylase (Shewanella sp. (strain ANA-3)).